Reading from the N-terminus, the 758-residue chain is 5-methyltetrahydropteroyltriglutamate--homocysteine methyltransferase (758 aa).

5-methyltetrahydropteroyltri-L-glutamate-binding positions include 17 to 20 (RELK) and Lys117. L-homocysteine is bound by residues 434 to 436 (IGS) and Glu487. L-methionine-binding positions include 434-436 (IGS) and Glu487. 5-methyltetrahydropteroyltri-L-glutamate contacts are provided by residues 518-519 (RC) and Trp564. Asp602 serves as a coordination point for L-homocysteine. Asp602 contacts L-methionine. A 5-methyltetrahydropteroyltri-L-glutamate-binding site is contributed by Glu608. Zn(2+)-binding residues include His644, Cys646, and Glu668. The active-site Proton donor is the His697. Residue Cys729 participates in Zn(2+) binding.

It belongs to the vitamin-B12 independent methionine synthase family. Zn(2+) serves as cofactor.

The enzyme catalyses 5-methyltetrahydropteroyltri-L-glutamate + L-homocysteine = tetrahydropteroyltri-L-glutamate + L-methionine. The protein operates within amino-acid biosynthesis; L-methionine biosynthesis via de novo pathway; L-methionine from L-homocysteine (MetE route): step 1/1. Functionally, catalyzes the transfer of a methyl group from 5-methyltetrahydrofolate to homocysteine resulting in methionine formation. In Photorhabdus laumondii subsp. laumondii (strain DSM 15139 / CIP 105565 / TT01) (Photorhabdus luminescens subsp. laumondii), this protein is 5-methyltetrahydropteroyltriglutamate--homocysteine methyltransferase.